We begin with the raw amino-acid sequence, 201 residues long: 3-isopropylmalate dehydratase small subunit (201 aa).

The protein belongs to the LeuD family. LeuD type 1 subfamily. As to quaternary structure, heterodimer of LeuC and LeuD.

It catalyses the reaction (2R,3S)-3-isopropylmalate = (2S)-2-isopropylmalate. Its pathway is amino-acid biosynthesis; L-leucine biosynthesis; L-leucine from 3-methyl-2-oxobutanoate: step 2/4. Functionally, catalyzes the isomerization between 2-isopropylmalate and 3-isopropylmalate, via the formation of 2-isopropylmaleate. This is 3-isopropylmalate dehydratase small subunit from Ruegeria sp. (strain TM1040) (Silicibacter sp.).